Here is a 191-residue protein sequence, read N- to C-terminus: Adenylate kinase (191 aa).

9–17 is a binding site for ATP; that stretch reads GVPGVGATT.

Belongs to the archaeal adenylate kinase family.

The protein resides in the cytoplasm. The catalysed reaction is AMP + ATP = 2 ADP. In Methanopyrus kandleri (strain AV19 / DSM 6324 / JCM 9639 / NBRC 100938), this protein is Adenylate kinase.